The sequence spans 539 residues: O-phosphoserine--tRNA(Cys) ligase (539 aa).

Residues 188–190 (HMT), 233–235 (SAS), 275–276 (YY), and asparagine 327 contribute to the substrate site.

This sequence belongs to the class-II aminoacyl-tRNA synthetase family. O-phosphoseryl-tRNA(Cys) synthetase subfamily. Homotetramer. Interacts with SepCysS.

The catalysed reaction is tRNA(Cys) + O-phospho-L-serine + ATP = O-phospho-L-seryl-tRNA(Cys) + AMP + diphosphate. Catalyzes the attachment of O-phosphoserine (Sep) to tRNA(Cys). The protein is O-phosphoserine--tRNA(Cys) ligase of Methanosarcina barkeri (strain Fusaro / DSM 804).